The sequence spans 84 residues: Large ribosomal subunit protein bL31B (84 aa).

Belongs to the bacterial ribosomal protein bL31 family. Type B subfamily. In terms of assembly, part of the 50S ribosomal subunit.

This Staphylococcus aureus (strain Mu3 / ATCC 700698) protein is Large ribosomal subunit protein bL31B.